A 477-amino-acid chain; its full sequence is Ribulose bisphosphate carboxylase large chain (477 aa).

The propeptide occupies Met-1–Ser-2. Position 3 is an N-acetylproline (Pro-3). At Lys-14 the chain carries N6,N6,N6-trimethyllysine. Residues Asn-123 and Thr-173 each coordinate substrate. The active-site Proton acceptor is the Lys-175. Residue Lys-177 participates in substrate binding. Positions 201, 203, and 204 each coordinate Mg(2+). Lys-201 bears the N6-carboxylysine mark. Catalysis depends on His-294, which acts as the Proton acceptor. Positions 295, 327, and 379 each coordinate substrate.

The protein belongs to the RuBisCO large chain family. Type I subfamily. In terms of assembly, heterohexadecamer of 8 large chains and 8 small chains; disulfide-linked. The disulfide link is formed within the large subunit homodimers. Mg(2+) serves as cofactor. Post-translationally, the disulfide bond which can form in the large chain dimeric partners within the hexadecamer appears to be associated with oxidative stress and protein turnover.

The protein resides in the plastid. The protein localises to the chloroplast. It catalyses the reaction 2 (2R)-3-phosphoglycerate + 2 H(+) = D-ribulose 1,5-bisphosphate + CO2 + H2O. The enzyme catalyses D-ribulose 1,5-bisphosphate + O2 = 2-phosphoglycolate + (2R)-3-phosphoglycerate + 2 H(+). RuBisCO catalyzes two reactions: the carboxylation of D-ribulose 1,5-bisphosphate, the primary event in carbon dioxide fixation, as well as the oxidative fragmentation of the pentose substrate in the photorespiration process. Both reactions occur simultaneously and in competition at the same active site. The sequence is that of Ribulose bisphosphate carboxylase large chain from Carthamus tinctorius (Safflower).